The primary structure comprises 111 residues: Cytochrome c oxidase subunit 6A1, mitochondrial (111 aa).

A mitochondrion-targeting transit peptide spans 1 to 26 (MASAVLSASRVSGLLGRALPRVGRPM). The Mitochondrial matrix segment spans residues 27-36 (SSGAHGEEGS). The chain crosses the membrane as a helical span at residues 37–61 (ARIWKALTYFVALPGVGVSMLNVFL). At 62–111 (KSRHEEHERPEFVAYPHLRIRTKPFPWGDGNHTLFHNPHMNPLPTGYEDE) the chain is on the mitochondrial intermembrane side.

This sequence belongs to the cytochrome c oxidase subunit 6A family. In terms of assembly, component of the cytochrome c oxidase (complex IV, CIV), a multisubunit enzyme composed of 14 subunits. The complex is composed of a catalytic core of 3 subunits MT-CO1, MT-CO2 and MT-CO3, encoded in the mitochondrial DNA, and 11 supernumerary subunits COX4I, COX5A, COX5B, COX6A, COX6B, COX6C, COX7A, COX7B, COX7C, COX8 and NDUFA4, which are encoded in the nuclear genome. The complex exists as a monomer or a dimer and forms supercomplexes (SCs) in the inner mitochondrial membrane with NADH-ubiquinone oxidoreductase (complex I, CI) and ubiquinol-cytochrome c oxidoreductase (cytochrome b-c1 complex, complex III, CIII), resulting in different assemblies (supercomplex SCI(1)III(2)IV(1) and megacomplex MCI(2)III(2)IV(2)).

The protein resides in the mitochondrion inner membrane. Its pathway is energy metabolism; oxidative phosphorylation. In terms of biological role, component of the cytochrome c oxidase, the last enzyme in the mitochondrial electron transport chain which drives oxidative phosphorylation. The respiratory chain contains 3 multisubunit complexes succinate dehydrogenase (complex II, CII), ubiquinol-cytochrome c oxidoreductase (cytochrome b-c1 complex, complex III, CIII) and cytochrome c oxidase (complex IV, CIV), that cooperate to transfer electrons derived from NADH and succinate to molecular oxygen, creating an electrochemical gradient over the inner membrane that drives transmembrane transport and the ATP synthase. Cytochrome c oxidase is the component of the respiratory chain that catalyzes the reduction of oxygen to water. Electrons originating from reduced cytochrome c in the intermembrane space (IMS) are transferred via the dinuclear copper A center (CU(A)) of subunit 2 and heme A of subunit 1 to the active site in subunit 1, a binuclear center (BNC) formed by heme A3 and copper B (CU(B)). The BNC reduces molecular oxygen to 2 water molecules unsing 4 electrons from cytochrome c in the IMS and 4 protons from the mitochondrial matrix. This Rattus norvegicus (Rat) protein is Cytochrome c oxidase subunit 6A1, mitochondrial (Cox6a1).